The primary structure comprises 60 residues: Protein translocase subunit SecE (60 aa).

A helical transmembrane segment spans residues 31–51; that stretch reads IIVVSTVIFFLVFFYALDIGI.

This sequence belongs to the SecE/SEC61-gamma family. In terms of assembly, component of the Sec protein translocase complex. Heterotrimer consisting of SecY, SecE and SecG subunits. The heterotrimers can form oligomers, although 1 heterotrimer is thought to be able to translocate proteins. Interacts with the ribosome. Interacts with SecDF, and other proteins may be involved. Interacts with SecA.

The protein resides in the cell membrane. Functionally, essential subunit of the Sec protein translocation channel SecYEG. Clamps together the 2 halves of SecY. May contact the channel plug during translocation. The polypeptide is Protein translocase subunit SecE (Staphylococcus epidermidis (strain ATCC 35984 / DSM 28319 / BCRC 17069 / CCUG 31568 / BM 3577 / RP62A)).